The primary structure comprises 292 residues: Trimeric intracellular cation channel type B (292 aa).

The Lumenal segment spans residues 1 to 16 (MEYPWDDLTLAFSRTS). A helical transmembrane segment spans residues 17–34 (MFPFFDIAHYLVSVMALK). Residues 35-47 (QRPGAVAAAWNNP) lie on the Cytoplasmic side of the membrane. Residues 48-69 (LASWLSAMLHCFGGGILSCMLL) traverse the membrane as a helical segment. Over 70–82 (AESPLKFLTNHTN) the chain is Lumenal. A helical transmembrane segment spans residues 83-100 (ILLASSIWYIVFFCPRDL). Topologically, residues 101-103 (VSQ) are cytoplasmic. Residues 104–122 (GYSYQPIQFLAAGMKEVTR) traverse the membrane as a helical segment. A 1,2-diacyl-sn-glycero-3-phospho-(1D-myo-inositol-4,5-bisphosphate) is bound by residues Lys118 and Arg122. Residues 123–140 (TWKIVGGVSDANSYYRNA) are Lumenal-facing. A helical transmembrane segment spans residues 141-158 (WIVMIVVGWARGAGGAVV). Topologically, residues 159 to 178 (TACEQLLKGDWKPEGDEWLK) are cytoplasmic. The helical transmembrane segment at 179 to 195 (MSFPCKITLLGSIMFTF) threads the bilayer. The Lumenal segment spans residues 196 to 206 (QHTRHLAISKH). Residues 207-225 (DLMFLYTIFLVTIKVTMMM) traverse the membrane as a helical segment. The Cytoplasmic segment spans residues 226 to 292 (TKDTAVTLTP…GAKRHAKKED (67 aa)). The interval 248 to 292 (RQQQQFSSSEKKTEVKPSSNGSASSASKRGAEPSGGAKRHAKKED) is disordered. Positions 265-274 (SSNGSASSAS) are enriched in low complexity.

Belongs to the TMEM38 family. As to quaternary structure, homotrimer; conformation seems to be controled by binding to diacylglycerol (DAG). As to expression, widely expressed.

The protein localises to the endoplasmic reticulum membrane. The catalysed reaction is K(+)(in) = K(+)(out). Channel activity is activated by increased cytosolic Ca(2+) levels and blocked by luminal high Ca(2+) levels. Its function is as follows. Intracellular monovalent cation channel required for maintenance of rapid intracellular calcium release. Acts as a potassium counter-ion channel that functions in synchronization with calcium release from intracellular stores. Activated by increased cytosolic Ca(2+) levels. The sequence is that of Trimeric intracellular cation channel type B (Tmem38b) from Mus musculus (Mouse).